A 638-amino-acid chain; its full sequence is Chaperone protein DnaK (638 aa).

Position 197 is a phosphothreonine; by autocatalysis (T197). The interval 600–638 (SGAQGGAQAGPGAGAGQQANQGSSNNKEDIQDADFEEVK) is disordered. Gly residues predominate over residues 602–614 (AQGGAQAGPGAGA). Low complexity predominate over residues 615–624 (GQQANQGSSN). The span at 625–638 (NKEDIQDADFEEVK) shows a compositional bias: basic and acidic residues.

Belongs to the heat shock protein 70 family.

Functionally, acts as a chaperone. The protein is Chaperone protein DnaK of Phocaeicola vulgatus (strain ATCC 8482 / DSM 1447 / JCM 5826 / CCUG 4940 / NBRC 14291 / NCTC 11154) (Bacteroides vulgatus).